We begin with the raw amino-acid sequence, 188 residues long: MSYGDSREKILSAATRLFQLQGYYGTGLNQIIKESGAPKGSLYYHFPGGKEQLAIEAVNEMKEYIRQKIADCMEACTDPAEGIQAFLKELSCQFSCTEDIEGLPVGLLAAETSLKSEPLREACHEAYKEWASVYEEKLRQTGCSESRAKEASTVVNAMIEGGILLSLTAKNSTPLLHISSCIPDLLKR.

In terms of domain architecture, HTH tetR-type spans 4–64 (GDSREKILSA…IEAVNEMKEY (61 aa)). Positions 27 to 46 (GLNQIIKESGAPKGSLYYHF) form a DNA-binding region, H-T-H motif.

Its function is as follows. Acts as a repressor of the lincomycin-resistance (lmrAB) and yxaGH operons. This chain is HTH-type transcriptional regulator LmrA (lmrA), found in Bacillus subtilis (strain 168).